An 862-amino-acid polypeptide reads, in one-letter code: Protein translocase subunit SecA (862 aa).

ATP is bound by residues Gln-88, 106–110 (GEGKT), and Asp-506. Zn(2+)-binding residues include Cys-839, Cys-841, Cys-850, and His-851.

This sequence belongs to the SecA family. In terms of assembly, monomer and homodimer. Part of the essential Sec protein translocation apparatus which comprises SecA, SecYEG and auxiliary proteins SecDF-YajC and YidC. Requires Zn(2+) as cofactor.

It localises to the cell inner membrane. It is found in the cytoplasm. It carries out the reaction ATP + H2O + cellular proteinSide 1 = ADP + phosphate + cellular proteinSide 2.. In terms of biological role, part of the Sec protein translocase complex. Interacts with the SecYEG preprotein conducting channel. Has a central role in coupling the hydrolysis of ATP to the transfer of proteins into and across the cell membrane, serving as an ATP-driven molecular motor driving the stepwise translocation of polypeptide chains across the membrane. This Campylobacter jejuni subsp. doylei (strain ATCC BAA-1458 / RM4099 / 269.97) protein is Protein translocase subunit SecA.